We begin with the raw amino-acid sequence, 620 residues long: Chaperone protein HscA homolog (620 aa).

This sequence belongs to the heat shock protein 70 family.

In terms of biological role, chaperone involved in the maturation of iron-sulfur cluster-containing proteins. Has a low intrinsic ATPase activity which is markedly stimulated by HscB. The polypeptide is Chaperone protein HscA homolog (Colwellia psychrerythraea (strain 34H / ATCC BAA-681) (Vibrio psychroerythus)).